A 446-amino-acid polypeptide reads, in one-letter code: Serum factor response D (446 aa).

The region spanning 1 to 61 (MGRKKIKIQR…PNAKEKYFQY (61 aa)) is the MADS-box domain. 3 disordered regions span residues 95-195 (KKEK…FNSS), 210-296 (TQEN…CQQV), and 319-432 (CSSP…SNLN). The span at 112–121 (SHSEEEDHKS) shows a compositional bias: basic and acidic residues. Residues 133-142 (HHNHHHHHHQ) are compositionally biased toward basic residues. Low complexity-rich tracts occupy residues 143 to 195 (YNNN…FNSS) and 216 to 282 (HYNN…NNNN). Positions 322–355 (PEDTSPMTSPRTPPFSSTNTNTLQTSPNSQQKSK) are enriched in polar residues. The span at 365-432 (NNNQNNNNQN…SPTSSSSNLN (68 aa)) shows a compositional bias: low complexity.

The protein localises to the nucleus. In Dictyostelium discoideum (Social amoeba), this protein is Serum factor response D (srfD).